A 43-amino-acid polypeptide reads, in one-letter code: Protein PsbN (43 aa).

Residues 7 to 27 (VAIFISCLLVSFTGYALYTAF) form a helical membrane-spanning segment.

The protein belongs to the PsbN family.

The protein resides in the plastid. Its subcellular location is the chloroplast thylakoid membrane. May play a role in photosystem I and II biogenesis. This chain is Protein PsbN, found in Zygnema circumcarinatum (Green alga).